Consider the following 173-residue polypeptide: uncharacterized protein (173 aa).

4 helical membrane-spanning segments follow: residues Leu13–Ser35, Ile50–Leu72, Asn107–Leu129, and Gly139–Leu161.

It is found in the cell membrane. This is an uncharacterized protein from Rickettsia prowazekii (strain Madrid E).